A 334-amino-acid chain; its full sequence is D-fructose 1,6-bisphosphatase class 2/sedoheptulose 1,7-bisphosphatase (334 aa).

Mn(2+)-binding residues include Asp33, Glu57, Asp85, and Glu88. Substrate is bound by residues 88 to 90, Tyr119, 164 to 166, and 186 to 188; these read EGT, RAR, and DGD. Residue Glu213 coordinates Mn(2+).

It belongs to the FBPase class 2 family. In terms of assembly, homotetramer. Mn(2+) serves as cofactor.

The enzyme catalyses beta-D-fructose 1,6-bisphosphate + H2O = beta-D-fructose 6-phosphate + phosphate. It catalyses the reaction D-sedoheptulose 1,7-bisphosphate + H2O = D-sedoheptulose 7-phosphate + phosphate. Its pathway is carbohydrate biosynthesis; Calvin cycle. Catalyzes the hydrolysis of fructose 1,6-bisphosphate (Fru 1,6-P2) and sedoheptulose 1,7-bisphosphate (Sed 1,7-P2) to fructose 6-phosphate and sedoheptulose 7-phosphate, respectively. The polypeptide is D-fructose 1,6-bisphosphatase class 2/sedoheptulose 1,7-bisphosphatase (Synechococcus sp. (strain CC9311)).